We begin with the raw amino-acid sequence, 709 residues long: Molybdenum cofactor sulfurase (709 aa).

An N6-(pyridoxal phosphate)lysine modification is found at Lys208. The active site involves Cys367. Positions 563–707 constitute an MOSC domain; sequence DNALDRQNCR…LESGMSVNFS (145 aa).

The protein belongs to the class-V pyridoxal-phosphate-dependent aminotransferase family. MOCOS subfamily. Requires pyridoxal 5'-phosphate as cofactor.

It carries out the reaction Mo-molybdopterin + L-cysteine + AH2 = thio-Mo-molybdopterin + L-alanine + A + H2O. It functions in the pathway cofactor biosynthesis; molybdopterin biosynthesis. In terms of biological role, sulfurates the molybdenum cofactor. Sulfation of molybdenum is essential for xanthine dehydrogenase (XDH) and aldehyde oxidase (ADO) enzymes in which molybdenum cofactor is liganded by 1 oxygen and 1 sulfur atom in active form. The polypeptide is Molybdenum cofactor sulfurase (Caenorhabditis elegans).